The chain runs to 116 residues: PTS system N,N'-diacetylchitobiose-specific EIIA component (116 aa).

Residues 15–113 (EELEEVVMGL…ITELIELHEK (99 aa)) enclose the PTS EIIA type-3 domain. His-89 acts as the Tele-phosphohistidine intermediate in catalysis. His-89 is modified (phosphohistidine; by HPr).

As to quaternary structure, forms a complex with ChbB (EIIB). ChbA is a homotrimer. Requires Mg(2+) as cofactor.

It localises to the cytoplasm. The phosphoenolpyruvate-dependent sugar phosphotransferase system (sugar PTS), a major carbohydrate active transport system, catalyzes the phosphorylation of incoming sugar substrates concomitantly with their translocation across the cell membrane. The enzyme II ChbABC PTS system is involved in the transport of the chitin disaccharide N,N'-diacetylchitobiose (GlcNAc2). The protein is PTS system N,N'-diacetylchitobiose-specific EIIA component (chbA) of Escherichia coli O157:H7.